The primary structure comprises 437 residues: ATP-dependent RNA helicase RhlB (437 aa).

A Q motif motif is present at residues 9 to 37 (QKFADLGLKPQVTEGLEKKGFEYCTPIQA). Positions 40 to 219 (LPVLLTGQDI…FEHMHNPEHV (180 aa)) constitute a Helicase ATP-binding domain. 53-60 (AQTGTGKT) lines the ATP pocket. A DEAD box motif is present at residues 165–168 (DEAD). A Helicase C-terminal domain is found at 245–390 (ALLQTLIEEE…VSDYDASALI (146 aa)). Residues 395–437 (APLRMRAPRTQQRRTNTGGTRSGNRKPQGRRPRQPRQSAPKQS) form a disordered region. Over residues 403 to 413 (RTQQRRTNTGG) the composition is skewed to low complexity. Over residues 417 to 428 (GNRKPQGRRPRQ) the composition is skewed to basic residues.

It belongs to the DEAD box helicase family. RhlB subfamily. Component of the RNA degradosome, which is a multiprotein complex involved in RNA processing and mRNA degradation.

The protein localises to the cytoplasm. It carries out the reaction ATP + H2O = ADP + phosphate + H(+). DEAD-box RNA helicase involved in RNA degradation. Has RNA-dependent ATPase activity and unwinds double-stranded RNA. This Vibrio campbellii (strain ATCC BAA-1116) protein is ATP-dependent RNA helicase RhlB.